A 193-amino-acid polypeptide reads, in one-letter code: Probable GTP-binding protein EngB (193 aa).

The EngB-type G domain occupies 24 to 193; the sequence is NIPEIALAGR…ELKAALAELL (170 aa). GTP contacts are provided by residues 32 to 39, 59 to 63, 77 to 80, 144 to 147, and 174 to 176; these read GRSNVGKS, GKTRT, DLPG, TKAD, and FSA. 2 residues coordinate Mg(2+): serine 39 and threonine 61.

It belongs to the TRAFAC class TrmE-Era-EngA-EngB-Septin-like GTPase superfamily. EngB GTPase family. Mg(2+) is required as a cofactor.

Its function is as follows. Necessary for normal cell division and for the maintenance of normal septation. The protein is Probable GTP-binding protein EngB of Syntrophomonas wolfei subsp. wolfei (strain DSM 2245B / Goettingen).